Reading from the N-terminus, the 415-residue chain is Calcium/calmodulin-dependent serine/threonine-protein kinase (415 aa).

A Protein kinase domain is found at 12–308 (YEISEILGRG…AQELLDHPWV (297 aa)). Residues 18–26 (LGRGGFSVV) and lysine 46 each bind ATP. Aspartate 173 serves as the catalytic Proton acceptor. Residues 318–328 (MDAEIVSRLQS) are calmodulin-binding.

It belongs to the protein kinase superfamily. CAMK Ser/Thr protein kinase family. CaMK subfamily.

It catalyses the reaction L-seryl-[protein] + ATP = O-phospho-L-seryl-[protein] + ADP + H(+). It carries out the reaction L-threonyl-[protein] + ATP = O-phospho-L-threonyl-[protein] + ADP + H(+). May be involved in signal transduction processes. This chain is Calcium/calmodulin-dependent serine/threonine-protein kinase, found in Malus domestica (Apple).